The sequence spans 80 residues: Putative membrane protein insertion efficiency factor (80 aa).

This sequence belongs to the UPF0161 family.

Its subcellular location is the cell membrane. Functionally, could be involved in insertion of integral membrane proteins into the membrane. This is Putative membrane protein insertion efficiency factor from Shouchella clausii (strain KSM-K16) (Alkalihalobacillus clausii).